A 288-amino-acid chain; its full sequence is MEGKEEDVRLGANRYTERQPIGTAAQGAEEKDYREPPAAPVFEVEELTSWSFYRAGIAEFVATFLFLYISILTVMGVNKSASKCATVGIQGIAWSFGGMIFALVYCTAGISGGHINPAVTFGLFLARKLSLTRAVFYMAMQCLGAICGAGVVKGFQRGLYMGSGGGANAVNPGYTKGDGLGAEIVGTFVLVYTVFSATDAKRNARDSHVPILAPLPIGFAVFLVHLATIPITGTGINPARSLGAAIVYNRAHAWHDHWIFWVGPFIGAALAAIYHVVVIRAIPFKSRD.

The tract at residues 1–30 (MEGKEEDVRLGANRYTERQPIGTAAQGAEE) is disordered. A run of 2 helical transmembrane segments spans residues 57 to 77 (IAEF…VMGV) and 92 to 114 (IAWS…SGGH). Residues 116–118 (NPA) carry the NPA 1 motif. 3 consecutive transmembrane segments (helical) span residues 135 to 155 (VFYM…VKGF), 177 to 197 (GDGL…VFSA), and 211 to 231 (ILAP…TIPI). The NPA 2 signature appears at 237 to 239 (NPA). The chain crosses the membrane as a helical span at residues 259–279 (IFWVGPFIGAALAAIYHVVVI).

It belongs to the MIP/aquaporin (TC 1.A.8) family. PIP (TC 1.A.8.11) subfamily. As to expression, expressed in roots and leaves.

The protein localises to the cell membrane. Its function is as follows. Water channel required to facilitate the transport of water across cell membrane. Increases the capacity for root water uptake under water deficit. May play a role in drought avoidance in upland rice. The protein is Aquaporin PIP 1-3 (PIP1-3) of Oryza sativa subsp. japonica (Rice).